The primary structure comprises 1038 residues: GTPase-activating Rap/Ran-GAP domain-like protein 3 (1038 aa).

Lysine 6 and serine 68 each carry phosphoserine. Residues 214-430 form the Rap-GAP domain; it reads LLVLEEQEGS…RTLDMLIRSL (217 aa). A phosphoserine mark is found at serine 449 and serine 455. In terms of domain architecture, CNH spans 512-824; the sequence is PHEAVCADPW…QLVASRSDIY (313 aa). 2 disordered regions span residues 833 to 863 and 937 to 1038; these read EGSS…FPSS and LLGL…IDLK. A Phosphothreonine modification is found at threonine 851. Residues 1019–1028 are compositionally biased toward polar residues; sequence SGSSPFQLMA.

The protein belongs to the GARNL3 family.

This Mus musculus (Mouse) protein is GTPase-activating Rap/Ran-GAP domain-like protein 3 (Garnl3).